A 382-amino-acid chain; its full sequence is Succinyl-diaminopimelate desuccinylase (382 aa).

Histidine 73 provides a ligand contact to Zn(2+). Aspartate 75 is an active-site residue. Aspartate 106 lines the Zn(2+) pocket. The active-site Proton acceptor is glutamate 140. Glutamate 141, glutamate 169, and histidine 355 together coordinate Zn(2+).

Belongs to the peptidase M20A family. DapE subfamily. As to quaternary structure, homodimer. It depends on Zn(2+) as a cofactor. Co(2+) serves as cofactor.

It catalyses the reaction N-succinyl-(2S,6S)-2,6-diaminopimelate + H2O = (2S,6S)-2,6-diaminopimelate + succinate. It participates in amino-acid biosynthesis; L-lysine biosynthesis via DAP pathway; LL-2,6-diaminopimelate from (S)-tetrahydrodipicolinate (succinylase route): step 3/3. Functionally, catalyzes the hydrolysis of N-succinyl-L,L-diaminopimelic acid (SDAP), forming succinate and LL-2,6-diaminopimelate (DAP), an intermediate involved in the bacterial biosynthesis of lysine and meso-diaminopimelic acid, an essential component of bacterial cell walls. This is Succinyl-diaminopimelate desuccinylase from Cellvibrio japonicus (strain Ueda107) (Pseudomonas fluorescens subsp. cellulosa).